The sequence spans 482 residues: Capsule synthesis positive regulator AcpB (482 aa).

2 consecutive PRD domains span residues 165-270 (PFEK…YKDI) and 283-395 (EGNL…YTSN).

This sequence belongs to the AtxA/AcpA family.

AcpB and AcpA regulate cap gene expression and capsule synthesis. The chain is Capsule synthesis positive regulator AcpB (acpB) from Bacillus anthracis.